Here is a 397-residue protein sequence, read N- to C-terminus: MEIVGCRAEDNSCPFRPPAMLFHGISGGHIQGIMEEMERRSKTEARLAKGAQLNGRDAGMPPLSPEKPALCAGCGGKISDRYYLLAVDKQWHLRCLKCCECKLALESELTCFAKDGSIYCKEDYYRRFSVQRCARCHLGISASEMVMRARDSVYHLSCFTCSTCNKTLTTGDHFGMKDSLVYCRAHFETLLQGEYPPQLSYTELAAKSGGLALPYFNGTGTVQKGRPRKRKSPALGVDIVNYNSGCNENEADHLDRDQQPYPPSQKTKRMRTSFKHHQLRTMKSYFAINHNPDAKDLKQLAQKTGLTKRVLQVWFQNARAKFRRNLLRQENGGVDKADGTSLPAPPSADSGALTPPGTATTLTDLTNPTITVVTSVTSNMDSHESGSPSQTTLTNLF.

LIM zinc-binding domains follow at residues 69 to 130 and 131 to 193; these read ALCA…RFSV and QRCA…LLQG. Disordered stretches follow at residues 248-272, 330-364, and 378-397; these read ENEA…RMRT, ENGG…TLTD, and SNMD…TNLF. Residues 267 to 326 constitute a DNA-binding region (homeobox); sequence TKRMRTSFKHHQLRTMKSYFAINHNPDAKDLKQLAQKTGLTKRVLQVWFQNARAKFRRNL. Low complexity predominate over residues 353 to 364; the sequence is LTPPGTATTLTD.

In terms of assembly, interacts with LDB1 and LDB2.

It is found in the nucleus. Its function is as follows. Involved in gonadal development. This is LIM/homeobox protein Lhx9 (LHX9) from Homo sapiens (Human).